We begin with the raw amino-acid sequence, 601 residues long: Vesicular glutamate transporter 3 (601 aa).

Over 1-89 (MPFKAFDTFK…CSCCGIPKRY (89 aa)) the chain is Cytoplasmic. Residues 90–110 (IIAVMSGLGFCISFGIRCNLG) traverse the membrane as a helical segment. The Vesicular portion of the chain corresponds to 111–143 (VAIVEMVNNSTVYVDGKPEIQTAQFNWDPETVG). Residue Asn119 is glycosylated (N-linked (GlcNAc...) asparagine). Residues 144–164 (LIHGSFFWGYIVTQIPGGFIS) traverse the membrane as a helical segment. Residues 165 to 166 (NK) are Cytoplasmic-facing. Residues 167–187 (FAASRVFGAAIFLTSTLNMFI) form a helical membrane-spanning segment. Residues 188 to 195 (PSAARVHY) are Vesicular-facing. The chain crosses the membrane as a helical span at residues 196–216 (GCVMGVRILQGLVEGVTYPAC). Residues 217–234 (HGMWSKWAPPLERSRLAT) lie on the Cytoplasmic side of the membrane. Residues 235–255 (TSFCGSYAGAVVAMPLAGVLV) traverse the membrane as a helical segment. Topologically, residues 256–262 (QYIGWAS) are vesicular. Residues 263–283 (VFYIYGMFGIIWYMFWLLQAY) form a helical membrane-spanning segment. At 284-327 (ECPAAHPTISNAERTYIETSIGEGANLASLSKFNTPWRRFFTSL) the chain is on the cytoplasmic side. The chain crosses the membrane as a helical span at residues 328-348 (PVYAIIVANFCRSWTFYLLLI). At 349–366 (SQPAYFEEVFGFAISKVG) the chain is on the vesicular side. The helical transmembrane segment at 367 to 387 (LLSAVPHMVMTIVVPIGGQLA) threads the bilayer. At 388–403 (DYLRSRKILTTTAVRK) the chain is on the cytoplasmic side. The helical transmembrane segment at 404 to 424 (IMNCGGFGMEATLLLVVGFSH) threads the bilayer. Residues 425-426 (TK) lie on the Vesicular side of the membrane. Residues 427–447 (GVAISFLVLAVGFSGFAISGF) traverse the membrane as a helical segment. At 448 to 460 (NVNHLDIAPRYAS) the chain is on the cytoplasmic side. The helical transmembrane segment at 461 to 481 (ILMGISNGVGTLSGMVCPLIV) threads the bilayer. The Vesicular segment spans residues 482-494 (GAMTKHKTREEWQ). The helical transmembrane segment at 495 to 515 (NVFLIAALVHYSGVIFYGVFA) threads the bilayer. Topologically, residues 516–598 (SGEKQDWADP…LSYQAEGDFS (83 aa)) are cytoplasmic. The tract at residues 576-601 (RQQRESAFDGEEPLSYQAEGDFSETS) is disordered.

This sequence belongs to the major facilitator superfamily. Sodium/anion cotransporter family. VGLUT subfamily. As to expression, expressed in restricted areas of the brain. Highest expression is found in the neurons of the basal forebrain, the hippocampal formation, and the majority of the neurons of the mesencephalic raphe nuclei. Expressed in inner hair cells of the ear.

It is found in the cytoplasmic vesicle. It localises to the secretory vesicle. The protein localises to the synaptic vesicle membrane. Its subcellular location is the cell membrane. The protein resides in the synapse. It is found in the synaptosome. The catalysed reaction is L-glutamate(out) = L-glutamate(in). It catalyses the reaction 3 Na(+)(out) + phosphate(out) = 3 Na(+)(in) + phosphate(in). The enzyme catalyses chloride(in) = chloride(out). With respect to regulation, the L-glutamate uniporter activity exhibits a biphasic dependence on chloride concentration. Chloride channel activity is allosterically activated by lumenal H(+) and Cl(-) leading to synaptic vesicles acidification. The L-glutamate transport activity is allosterically activated by lumenal H(+) and Cl(-), preventing non-vesicular L-glutamate release. Its function is as follows. Multifunctional transporter that transports L-glutamate as well as multiple ions such as chloride, sodium and phosphate. At the synaptic vesicle membrane, mainly functions as an uniporter that mediates the uptake of L-glutamate into synaptic vesicles at presynaptic nerve terminals of excitatory neural cells. The L-glutamate uniporter activity is electrogenic and is driven by the proton electrochemical gradient, mainly by the electrical gradient established by the vacuolar H(+)-ATPase across the synaptic vesicle membrane. In addition, functions as a chloride channel that allows a chloride permeation through the synaptic vesicle membrane that affects the proton electrochemical gradient and promotes synaptic vesicles acidification. At the plasma membrane, following exocytosis, functions as a symporter of Na(+) and phosphate from the extracellular space to the cytoplasm allowing synaptic phosphate homeostasis regulation. The symporter activity is electrogenic. Moreover, operates synergistically with SLC18A3/VACHT under a constant H(+) gradient, thereby allowing striatal vesicular acetylcholine uptake. The sequence is that of Vesicular glutamate transporter 3 from Mus musculus (Mouse).